A 461-amino-acid chain; its full sequence is Cysteine--tRNA ligase (461 aa).

Position 28 (Cys-28) interacts with Zn(2+). The 'HIGH' region signature appears at 30-40 (ITVYDLCHIGH). The Zn(2+) site is built by Cys-209, His-234, and Glu-238. A 'KMSKS' region motif is present at residues 266–270 (KMSKS). Lys-269 is an ATP binding site.

It belongs to the class-I aminoacyl-tRNA synthetase family. In terms of assembly, monomer. Zn(2+) is required as a cofactor.

It is found in the cytoplasm. The enzyme catalyses tRNA(Cys) + L-cysteine + ATP = L-cysteinyl-tRNA(Cys) + AMP + diphosphate. The chain is Cysteine--tRNA ligase from Shigella boydii serotype 18 (strain CDC 3083-94 / BS512).